Consider the following 210-residue polypeptide: PEP-dependent dihydroxyacetone kinase, ADP-binding subunit DhaL (210 aa).

Residues 6-206 (TQIVNWLTRC…VMFMMQMLAL (201 aa)) form the DhaL domain. Mg(2+) is bound by residues D30, D35, and D37. Residues 38-41 (HGLN), 79-80 (AS), G121, M130, R178, and 191-193 (DPG) each bind ADP.

Homodimer. The dihydroxyacetone kinase complex is composed of a homodimer of DhaM, a homodimer of DhaK and the subunit DhaL. DhaL also forms a complex with DhaR. The cofactor is Mg(2+).

The protein localises to the cytoplasm. The enzyme catalyses dihydroxyacetone + phosphoenolpyruvate = dihydroxyacetone phosphate + pyruvate. The protein operates within polyol metabolism; glycerol degradation. Its function is as follows. ADP-binding subunit of the dihydroxyacetone kinase, which is responsible for the phosphoenolpyruvate (PEP)-dependent phosphorylation of dihydroxyacetone. DhaL-ADP is converted to DhaL-ATP via a phosphoryl group transfer from DhaM and transmits it to dihydroxyacetone bound to DhaK. DhaL also acts as coactivator of the transcription activator DhaR by binding to the sensor domain of DhaR. In the presence of dihydroxyacetone, DhaL-ADP displaces DhaK and stimulates DhaR activity. In the absence of dihydroxyacetone, DhaL-ADP is converted by the PTS to DhaL-ATP, which does not bind to DhaR. The sequence is that of PEP-dependent dihydroxyacetone kinase, ADP-binding subunit DhaL from Escherichia coli (strain K12).